We begin with the raw amino-acid sequence, 429 residues long: 4-hydroxyphenylacetate degradation bifunctional isomerase/decarboxylase (429 aa).

Approximate repeat units follow at residues 1-215 (MKGT…RKSF) and 216-429 (PTLP…ETAK). A divalent metal cation contacts are provided by E276, E278, and D307.

This sequence belongs to the FAH family. As to quaternary structure, monomer. It depends on Mg(2+) as a cofactor.

It catalyses the reaction (2E,4Z)-5-hydroxypenta-2,4-diene-1,2,5-tricarboxylate = (3E,5R)-5-carboxy-2-oxohept-3-enedioate. It carries out the reaction (3E,5R)-5-carboxy-2-oxohept-3-enedioate + H(+) = (4Z)-2-oxohept-4-enedioate + CO2. Its pathway is aromatic compound metabolism; 4-hydroxyphenylacetate degradation; pyruvate and succinate semialdehyde from 4-hydroxyphenylacetate: step 4/7. It participates in aromatic compound metabolism; 4-hydroxyphenylacetate degradation; pyruvate and succinate semialdehyde from 4-hydroxyphenylacetate: step 5/7. Decarboxylates OPET (5-oxo-pent-3-ene-1,2,5-tricarboxylic acid) into HHDD (2-hydroxy-hept-2,4-diene-1,7-dioate) and isomerizes it to OHED (2-oxo-hept-3-ene-1,7-dioate). The chain is 4-hydroxyphenylacetate degradation bifunctional isomerase/decarboxylase (hpaG) from Escherichia coli.